Reading from the N-terminus, the 149-residue chain is Protein FAM72A (149 aa).

It belongs to the FAM72 family. As to quaternary structure, interacts with UNG. In terms of tissue distribution, expressed at high levels in stomach and also in kidney and, at low levels, in heart (at protein level). In the stomach, highly expressed in foveolar cells, parietal cells and chief cells (at protein level). In kidney, expressed in endothelial cells, mesangial and epithelial cells (parietal and visceral epithelium) around glomerulus (at protein level).

It localises to the cytoplasm. Its subcellular location is the mitochondrion. Its function is as follows. May play a role in the regulation of cellular reactive oxygen species metabolism. May participate in cell growth regulation. The sequence is that of Protein FAM72A (FAM72A) from Bos taurus (Bovine).